The following is a 137-amino-acid chain: Large ribosomal subunit protein uL16c (137 aa).

Belongs to the universal ribosomal protein uL16 family. As to quaternary structure, part of the 50S ribosomal subunit.

Its subcellular location is the plastid. It is found in the chloroplast. This Adiantum capillus-veneris (Maidenhair fern) protein is Large ribosomal subunit protein uL16c.